We begin with the raw amino-acid sequence, 1327 residues long: Vascular endothelial growth factor receptor 1 (1327 aa).

A signal peptide spans 1-24; the sequence is MPRQLLSGTVLLGAAFLLAGSTSG. Residues 25–749 lie on the Extracellular side of the membrane; sequence SKLKVPVLSV…GTVERSNLEL (725 aa). Ig-like C2-type domains lie at 30 to 121, 120 to 222, 227 to 323, 331 to 417, 424 to 545, 552 to 644, and 651 to 737; these read PVLS…SIVY, VYVF…HRET, DIKL…TTVI, NLKR…LTVT, PQIY…RNVS, PSGF…KDVS, and PALL…AYVT. N-linked (GlcNAc...) asparagine glycosylation is found at asparagine 48, asparagine 73, asparagine 82, asparagine 98, and asparagine 125. A disulfide bond links cysteine 51 and cysteine 105. Cysteines 154 and 203 form a disulfide. A glycan (N-linked (GlcNAc...) asparagine) is linked at asparagine 247. Cysteine 248 and cysteine 307 form a disulfide bridge. 11 N-linked (GlcNAc...) asparagine glycosylation sites follow: asparagine 319, asparagine 383, asparagine 398, asparagine 409, asparagine 413, asparagine 470, asparagine 512, asparagine 543, asparagine 593, asparagine 615, and asparagine 663. Cysteines 450 and 531 form a disulfide. Cysteine 573 and cysteine 626 are oxidised to a cystine. An intrachain disulfide couples cysteine 672 to cysteine 721. The chain crosses the membrane as a helical span at residues 750–770; the sequence is ITLTCTCVAATLFWLLLTLFI. The Cytoplasmic segment spans residues 771-1327; the sequence is RKLKRPYFSE…SVVHYSQPSI (557 aa). Residues 819-1151 form the Protein kinase domain; that stretch reads LKLGKSLGHG…ELVKRLGDLL (333 aa). ATP is bound by residues 825–833 and lysine 853; that span reads LGHGAFGKV. A disordered region spans residues 950-971; sequence ASVTSSESFASSGFQEDKSLSD. The span at 951 to 961 shows a compositional bias: low complexity; the sequence is SVTSSESFASS. Catalysis depends on aspartate 1015, which acts as the Proton acceptor. A phosphotyrosine; by autocatalysis mark is found at tyrosine 1046, tyrosine 1162, tyrosine 1202, tyrosine 1231, tyrosine 1316, and tyrosine 1322.

It belongs to the protein kinase superfamily. Tyr protein kinase family. CSF-1/PDGF receptor subfamily. As to quaternary structure, interacts with VEGFA, VEGFB and PGF. Monomer in the absence of bound VEGFA, VEGFB or PGF. Homodimer in the presence of bound VEGFA, VEGFB and PGF. Autophosphorylated on tyrosine residues upon ligand binding.

It is found in the cell membrane. The protein resides in the endosome. Its subcellular location is the secreted. It catalyses the reaction L-tyrosyl-[protein] + ATP = O-phospho-L-tyrosyl-[protein] + ADP + H(+). Its activity is regulated as follows. Present in an inactive conformation in the absence of bound ligand. Binding of VEGFA, VEGFB or PGF leads to dimerization and activation by autophosphorylation on tyrosine residues. Tyrosine-protein kinase that acts as a cell-surface receptor for VEGFA, VEGFB and PGF, and plays an essential role in the regulation of angiogenesis, cell survival, cell migration, macrophage function, and chemotaxis. Acts as a positive regulator of postnatal retinal hyaloid vessel regression. Has very high affinity for VEGFA and relatively low protein kinase activity; may function as a negative regulator of VEGFA signaling by limiting the amount of free VEGFA and preventing its binding to KDR. Ligand binding leads to the activation of several signaling cascades. Activation of PLCG1 leads to the production of the cellular signaling molecules diacylglycerol and inositol 1,4,5-trisphosphate and the activation of protein kinase C. Mediates phosphorylation of PIK3R1, the regulatory subunit of phosphatidylinositol 3-kinase, leading to activation of phosphatidylinositol kinase and the downstream signaling pathway. Mediates activation of MAPK1/ERK2, MAPK3/ERK1 and the MAP kinase signaling pathway, as well as of the AKT1 signaling pathway. Phosphorylates PLCG1. Promotes phosphorylation of AKT1 and CBL. The protein is Vascular endothelial growth factor receptor 1 (FLT1) of Gallus gallus (Chicken).